The following is a 404-amino-acid chain: Cytochrome b (404 aa).

The next 4 helical transmembrane spans lie at 35–55 (FGSLAGLCLVIQILTGVFLAM), 79–101 (WLLRYMHANGASMFFIVVYLHFF), 116–136 (VWCLGVVILLLMIVTAFIGYV), and 182–202 (FFSLHYLLPFIIAGASILHLA). 2 residues coordinate heme b: H85 and H99. 2 residues coordinate heme b: H186 and H200. An a ubiquinone-binding site is contributed by H205. 4 helical membrane-spanning segments follow: residues 228–248 (IYVKDLVGWVAFAIFFSIFVF), 292–312 (LGGVAAIGLVFVSLLALPFIN), 324–344 (IHQKFFWLLVADCLLLGWIGC), and 351–370 (YVTIGQIASVGFFFYFAITP).

The protein belongs to the cytochrome b family. As to quaternary structure, the main subunits of complex b-c1 are: cytochrome b, cytochrome c1 and the Rieske protein. Heme b serves as cofactor.

It localises to the mitochondrion inner membrane. Functionally, component of the ubiquinol-cytochrome c reductase complex (complex III or cytochrome b-c1 complex) that is part of the mitochondrial respiratory chain. The b-c1 complex mediates electron transfer from ubiquinol to cytochrome c. Contributes to the generation of a proton gradient across the mitochondrial membrane that is then used for ATP synthesis. The polypeptide is Cytochrome b (MT-CYB) (Marchantia polymorpha (Common liverwort)).